Consider the following 396-residue polypeptide: MAAPCVSYGGAVSYRLLLWGRGSLARKQGLWKTAAPELQTNVRSQILRLRHTAFVIPKKNVPTSKRETYTEDFIKKQIEEFNIGKRHLANMMGEDPETFTQEDIDRAIAYLFPSGLFEKRARPVMKHPEQIFPRQRAIQWGEDGRPFHYLFYTGKQSYYSLMHDVYGMLLNLEKHQSHLQAKSLLPEKTVTRDVIGSRWLIKEELEEMLVEKLSDLDYMQFIRLLEKLLTSQCGAAEEEFVQRFRRSVTLESKKQLIEPVQYDEQGMAFSKSEGKRKTAKAEAIVYKHGSGRIKVNGIDYQLYFPITQDREQLMFPFHFVDRLGKHDVTCTVSGGGRSAQAGAIRLAMAKALCSFVTEDEVEWMRQAGLLTTDPRVRERKKPGQEGARRKFTWKKR.

Lys287 bears the N6-acetyllysine mark. Residues 374–396 are disordered; that stretch reads PRVRERKKPGQEGARRKFTWKKR.

It belongs to the universal ribosomal protein uS9 family. In terms of assembly, component of the mitochondrial small ribosomal subunit (mt-SSU). Mature mammalian 55S mitochondrial ribosomes consist of a small (28S) and a large (39S) subunit. The 28S small subunit contains a 12S ribosomal RNA (12S mt-rRNA) and 30 different proteins. The 39S large subunit contains a 16S rRNA (16S mt-rRNA), a copy of mitochondrial valine transfer RNA (mt-tRNA(Val)), which plays an integral structural role, and 52 different proteins.

Its subcellular location is the mitochondrion. This Homo sapiens (Human) protein is Small ribosomal subunit protein uS9m (MRPS9).